The following is a 734-amino-acid chain: Photosystem I P700 chlorophyll a apoprotein A2 (734 aa).

The next 8 membrane-spanning stretches (helical) occupy residues 46–69 (IFASHFGQLAIIFLWTSGNLFHVA), 135–158 (LYNGSMFLLFIATLALFAGWLHLE), 175–199 (LNHHLSALFGLSSLAWSGHLIHVAI), 273–291 (IAHHHLAIAVLFIVAGHMY), 330–353 (LHFQLGLALASLGVITSLVAQHMY), 369–395 (AALYTHHQYIAGFIMTGAFAHGAIFFI), 417–439 (AIISHLSWVTLFLGFHTLGLYVH), and 517–535 (FLVHHAIALGLHTTTLILV). Positions 559 and 568 each coordinate [4Fe-4S] cluster. A run of 2 helical transmembrane segments spans residues 575–596 (AFYLAVFWMLNTIGWTTFYWHW) and 643–665 (LAVWGWMFLFGHLVWATGFMFLI). Chlorophyll a-binding residues include His-654, Met-662, and Tyr-670. Residue Trp-671 coordinates phylloquinone. The helical transmembrane segment at 707–727 (LVGLAHFSVGYVFTYAAFLIA) threads the bilayer.

Belongs to the PsaA/PsaB family. In terms of assembly, the PsaA/B heterodimer binds the P700 chlorophyll special pair and subsequent electron acceptors. PSI consists of a core antenna complex that captures photons, and an electron transfer chain that converts photonic excitation into a charge separation. The eukaryotic PSI reaction center is composed of at least 11 subunits. P700 is a chlorophyll a/chlorophyll a' dimer, A0 is one or more chlorophyll a, A1 is one or both phylloquinones and FX is a shared 4Fe-4S iron-sulfur center. is required as a cofactor.

It is found in the plastid. The protein localises to the chloroplast thylakoid membrane. The enzyme catalyses reduced [plastocyanin] + hnu + oxidized [2Fe-2S]-[ferredoxin] = oxidized [plastocyanin] + reduced [2Fe-2S]-[ferredoxin]. Its function is as follows. PsaA and PsaB bind P700, the primary electron donor of photosystem I (PSI), as well as the electron acceptors A0, A1 and FX. PSI is a plastocyanin/cytochrome c6-ferredoxin oxidoreductase, converting photonic excitation into a charge separation, which transfers an electron from the donor P700 chlorophyll pair to the spectroscopically characterized acceptors A0, A1, FX, FA and FB in turn. Oxidized P700 is reduced on the lumenal side of the thylakoid membrane by plastocyanin or cytochrome c6. This is Photosystem I P700 chlorophyll a apoprotein A2 from Euglena gracilis.